We begin with the raw amino-acid sequence, 198 residues long: uncharacterized protein (198 aa).

Its subcellular location is the plastid. It localises to the chloroplast. This is an uncharacterized protein from Antithamnion sp. (Red alga).